The following is a 220-amino-acid chain: 2-hydroxy-3-keto-5-methylthiopentenyl-1-phosphate phosphatase (220 aa).

The protein belongs to the HAD-like hydrolase superfamily. MtnX family.

It catalyses the reaction 2-hydroxy-5-methylsulfanyl-3-oxopent-1-enyl phosphate + H2O = 1,2-dihydroxy-5-(methylsulfanyl)pent-1-en-3-one + phosphate. It participates in amino-acid biosynthesis; L-methionine biosynthesis via salvage pathway; L-methionine from S-methyl-5-thio-alpha-D-ribose 1-phosphate: step 4/6. Its function is as follows. Dephosphorylates 2-hydroxy-3-keto-5-methylthiopentenyl-1-phosphate (HK-MTPenyl-1-P) yielding 1,2-dihydroxy-3-keto-5-methylthiopentene (DHK-MTPene). This is 2-hydroxy-3-keto-5-methylthiopentenyl-1-phosphate phosphatase from Geobacillus thermodenitrificans (strain NG80-2).